The primary structure comprises 125 residues: Large ribosomal subunit protein uL22 (125 aa).

This sequence belongs to the universal ribosomal protein uL22 family. Part of the 50S ribosomal subunit.

This protein binds specifically to 23S rRNA; its binding is stimulated by other ribosomal proteins, e.g. L4, L17, and L20. It is important during the early stages of 50S assembly. It makes multiple contacts with different domains of the 23S rRNA in the assembled 50S subunit and ribosome. In terms of biological role, the globular domain of the protein is located near the polypeptide exit tunnel on the outside of the subunit, while an extended beta-hairpin is found that lines the wall of the exit tunnel in the center of the 70S ribosome. This is Large ribosomal subunit protein uL22 from Thermobifida fusca (strain YX).